Consider the following 105-residue polypeptide: Replication initiation control protein YabA (105 aa).

4 residues coordinate Zn(2+): histidine 79, cysteine 81, cysteine 95, and cysteine 98.

Belongs to the YabA family. In terms of assembly, homotetramer. Interacts with both DnaA and DnaN, acting as a bridge between these two proteins. Requires Zn(2+) as cofactor.

It is found in the cytoplasm. Its subcellular location is the nucleoid. Its function is as follows. Involved in control of chromosome replication initiation. Inhibits the cooperative binding of DnaA to the oriC region, thus negatively regulating initiation of chromosome replication. Inhibits the ability of DnaA-ATP to form a helix on DNA; does not disassemble preformed DnaA-DNA helices. Decreases the residence time of DnaA on the chromosome at its binding sites (oriC, replication forks and promoter-binding sites). Tethers DnaA to the replication machinery via the DNA polymerase beta sliding clamp subunit (dnaN). Associates with oriC and other DnaA targets on the chromosome in a DnaA-dependent manner. The chain is Replication initiation control protein YabA from Streptococcus sanguinis (strain SK36).